Here is a 151-residue protein sequence, read N- to C-terminus: Ribosomal RNA large subunit methyltransferase H (151 aa).

Residues leucine 73, glycine 100, and 119–124 (LSDLTM) contribute to the S-adenosyl-L-methionine site.

It belongs to the RNA methyltransferase RlmH family. In terms of assembly, homodimer.

It localises to the cytoplasm. It carries out the reaction pseudouridine(1915) in 23S rRNA + S-adenosyl-L-methionine = N(3)-methylpseudouridine(1915) in 23S rRNA + S-adenosyl-L-homocysteine + H(+). Specifically methylates the pseudouridine at position 1915 (m3Psi1915) in 23S rRNA. This is Ribosomal RNA large subunit methyltransferase H from Aliarcobacter butzleri (strain RM4018) (Arcobacter butzleri).